The chain runs to 379 residues: UDP-4-amino-4-deoxy-L-arabinose--oxoglutarate aminotransferase (379 aa).

Lys-182 is modified (N6-(pyridoxal phosphate)lysine).

It belongs to the DegT/DnrJ/EryC1 family. ArnB subfamily. In terms of assembly, homodimer. Pyridoxal 5'-phosphate serves as cofactor.

It catalyses the reaction UDP-4-amino-4-deoxy-beta-L-arabinose + 2-oxoglutarate = UDP-beta-L-threo-pentopyranos-4-ulose + L-glutamate. The protein operates within nucleotide-sugar biosynthesis; UDP-4-deoxy-4-formamido-beta-L-arabinose biosynthesis; UDP-4-deoxy-4-formamido-beta-L-arabinose from UDP-alpha-D-glucuronate: step 2/3. It participates in bacterial outer membrane biogenesis; lipopolysaccharide biosynthesis. In terms of biological role, catalyzes the conversion of UDP-4-keto-arabinose (UDP-Ara4O) to UDP-4-amino-4-deoxy-L-arabinose (UDP-L-Ara4N). The modified arabinose is attached to lipid A and is required for resistance to polymyxin and cationic antimicrobial peptides. This chain is UDP-4-amino-4-deoxy-L-arabinose--oxoglutarate aminotransferase, found in Escherichia fergusonii (strain ATCC 35469 / DSM 13698 / CCUG 18766 / IAM 14443 / JCM 21226 / LMG 7866 / NBRC 102419 / NCTC 12128 / CDC 0568-73).